Here is an 89-residue protein sequence, read N- to C-terminus: Small ribosomal subunit protein uS17 (89 aa).

Belongs to the universal ribosomal protein uS17 family. In terms of assembly, part of the 30S ribosomal subunit.

In terms of biological role, one of the primary rRNA binding proteins, it binds specifically to the 5'-end of 16S ribosomal RNA. The sequence is that of Small ribosomal subunit protein uS17 from Chlorobium chlorochromatii (strain CaD3).